Here is an 838-residue protein sequence, read N- to C-terminus: Transient receptor potential cation channel subfamily V member 1 (838 aa).

Disordered regions lie at residues M1 to C63 and R86 to P109. Topologically, residues M1–R432 are cytoplasmic. The stretch at R110–R138 is one ANK 1 repeat. R115 is an ATP binding site. S116 is modified (phosphoserine; by PKA and PKD). T144 is modified (phosphothreonine; by PKA; in vitro). One copy of the ANK 2 repeat lies at T153–S185. Residues K155, K160, N164, Y199–Q202, and E210–R211 contribute to the ATP site. 4 ANK repeats span residues T203 to Q228, E249 to D276, N285 to P321, and T335 to H358. T370 carries the phosphothreonine; by PKA; in vitro modification. One copy of the ANK 7 repeat lies at N393 to V415. Residues I433 to Y453 form a helical membrane-spanning segment. The Extracellular portion of the chain corresponds to Y454–D471. A helical membrane pass occupies residues Y472–L497. The Cytoplasmic portion of the chain corresponds to Q498–S510. S502 carries the post-translational modification Phosphoserine; by PKC/PRKCE. Y511–S512 contacts resiniferatoxin. Residues Y511 to F531 traverse the membrane as a helical segment. Residues S532 to K535 are Extracellular-facing. The chain crosses the membrane as a helical span at residues E536–T556. T550 and R557 together coordinate resiniferatoxin. Over R557–K571 the chain is Cytoplasmic. A helical membrane pass occupies residues M572–I599. The Extracellular segment spans residues E600–S626. Residue N604 is glycosylated (N-linked (GlcNAc...) asparagine). The segment at residues Y627–F649 is an intramembrane region (pore-forming). Residue G643 participates in Na(+) binding. A Selectivity filter motif is present at residues G643–D646. Position 646 (D646) interacts with Ca(2+). At T650–A657 the chain is on the extracellular side. A helical membrane pass occupies residues V658–V686. Positions E684–F712 are AD. Residues N687–K838 are Cytoplasmic-facing. Residue T704 is modified to Phosphothreonine. Residues E767 to T801 form an interaction with calmodulin region. Phosphoserine; by PKA; in vitro is present on S774. The tract at residues L777–L792 is required for PIP2-mediated channel inhibition. S800 bears the Phosphoserine; by PKC/PRKCE and PKC/PRKCZ mark. S820 bears the Phosphoserine; by PKA; in vitro mark.

Belongs to the transient receptor (TC 1.A.4) family. TrpV subfamily. TRPV1 sub-subfamily. Homotetramer. Interacts with PIRT. May also form a heteromeric channel with TRPV3. Interacts with CALM, PRKCM and CSK. Interacts with PRKCG and NTRK1, probably by forming a trimeric complex. Interacts with the Scolopendra mutilans RhTx toxin. Interacts with the spider Tau-theraphotoxin-Hs1a. Interacts with TMEM100. Interacts with PACS2. In terms of processing, phosphorylation by PKA reverses capsaicin-induced dephosphorylation at multiple sites, probably including Ser-116 as a major phosphorylation site. Phosphorylation by CAMKII seems to regulate binding to vanilloids. Phosphorylated and modulated by PRKCE, PRKCM and probably PRKCZ. Dephosphorylation by calcineurin seems to lead to receptor desensitization and phosphorylation by CAMKII recovers activity. In terms of tissue distribution, predominantly expressed in trigeminal and dorsal root sensory ganglia. Expressed also in hippocampus, cortex, cerebellum, olfactory bulb, mesencephalon and hindbrain. High expression in the cell bodies and dendrites of neurons in the hippocampus and in the cortex. In the brain detected also in astrocytes and pericytes (at protein level). Isoform 1 and isoform 3 are expressed in brain and peripheral blood mononuclear cells.

Its subcellular location is the postsynaptic cell membrane. The protein localises to the cell projection. It is found in the dendritic spine membrane. It localises to the cell membrane. It catalyses the reaction Ca(2+)(in) = Ca(2+)(out). It carries out the reaction Mg(2+)(in) = Mg(2+)(out). The catalysed reaction is Na(+)(in) = Na(+)(out). The enzyme catalyses K(+)(in) = K(+)(out). Its activity is regulated as follows. Channel activity is activated via the interaction with PIRT and phosphatidylinositol 4,5-bisphosphate (PIP2). Both PIRT and PIP2 are required to activate channel activity. The channel is sensitized by ATP binding. Repeated stimulation with capsaicin gives rise to progressively smaller responses, due to desensitization. This desensitization is triggered by the influx of calcium ions and is inhibited by elevated ATP levels. Ca(2+) and CALM displace ATP from its binding site and trigger a conformation change that leads to a closed, desensitized channel. Intracellular PIP2 inhibits desensitization. The double-knot toxin (DkTx) from the Chinese earth tiger tarantula activates the channel and traps it in an open conformation. The Scolopendra mutilans RhTx toxin potentiates the heat activation pathway mediated by this channel by binding to the charge-rich outer pore region (in an activated state). Functionally, non-selective calcium permeant cation channel involved in detection of noxious chemical and thermal stimuli. Seems to mediate proton influx and may be involved in intracellular acidosis in nociceptive neurons. Involved in mediation of inflammatory pain and hyperalgesia. Sensitized by a phosphatidylinositol second messenger system activated by receptor tyrosine kinases, which involves PKC isozymes and PCL. Activation by vanilloids, like capsaicin, and temperatures higher than 42 degrees Celsius. Upon activation, exhibits a time- and Ca(2+)-dependent outward rectification, followed by a long-lasting refractory state. Mild extracellular acidic pH (6.5) potentiates channel activation by noxious heat and vanilloids, whereas acidic conditions (pH &lt;6) directly activate the channel. Can be activated by endogenous compounds, including 12-hydroperoxytetraenoic acid and bradykinin. Acts as ionotropic endocannabinoid receptor with central neuromodulatory effects. Triggers a form of long-term depression (TRPV1-LTD) mediated by the endocannabinoid anandamine in the hippocampus and nucleus accumbens by affecting AMPA receptors endocytosis. In terms of biological role, does not display channel activity in response to noxious chemical compounds, such as capsaicin and the vanilloid resiniferatoxin. Channel activity is not elicited by mildly acidic extracellular pH, and only slight channel activity is observed in response to noxiuos heat stimuli. This is Transient receptor potential cation channel subfamily V member 1 (Trpv1) from Rattus norvegicus (Rat).